Here is a 231-residue protein sequence, read N- to C-terminus: 2-C-methyl-D-erythritol 4-phosphate cytidylyltransferase (231 aa).

It belongs to the IspD/TarI cytidylyltransferase family. IspD subfamily.

It catalyses the reaction 2-C-methyl-D-erythritol 4-phosphate + CTP + H(+) = 4-CDP-2-C-methyl-D-erythritol + diphosphate. The protein operates within isoprenoid biosynthesis; isopentenyl diphosphate biosynthesis via DXP pathway; isopentenyl diphosphate from 1-deoxy-D-xylulose 5-phosphate: step 2/6. In terms of biological role, catalyzes the formation of 4-diphosphocytidyl-2-C-methyl-D-erythritol from CTP and 2-C-methyl-D-erythritol 4-phosphate (MEP). The polypeptide is 2-C-methyl-D-erythritol 4-phosphate cytidylyltransferase (Xylella fastidiosa (strain 9a5c)).